The sequence spans 442 residues: Trigger factor (442 aa).

The 86-residue stretch at glycine 162–proline 247 folds into the PPIase FKBP-type domain.

This sequence belongs to the FKBP-type PPIase family. Tig subfamily.

Its subcellular location is the cytoplasm. The catalysed reaction is [protein]-peptidylproline (omega=180) = [protein]-peptidylproline (omega=0). Its function is as follows. Involved in protein export. Acts as a chaperone by maintaining the newly synthesized protein in an open conformation. Functions as a peptidyl-prolyl cis-trans isomerase. The chain is Trigger factor from Lactobacillus acidophilus (strain ATCC 700396 / NCK56 / N2 / NCFM).